Consider the following 80-residue polypeptide: uncharacterized protein (80 aa).

Functionally, essential for virus function. This is an uncharacterized protein from Sulfolobus spindle-shape virus 1 (SSV1).